A 213-amino-acid polypeptide reads, in one-letter code: Uridine kinase (213 aa).

ATP is bound at residue 15 to 22 (GASASGKS).

The protein belongs to the uridine kinase family.

Its subcellular location is the cytoplasm. It carries out the reaction uridine + ATP = UMP + ADP + H(+). It catalyses the reaction cytidine + ATP = CMP + ADP + H(+). It functions in the pathway pyrimidine metabolism; CTP biosynthesis via salvage pathway; CTP from cytidine: step 1/3. Its pathway is pyrimidine metabolism; UMP biosynthesis via salvage pathway; UMP from uridine: step 1/1. The protein is Uridine kinase of Erwinia tasmaniensis (strain DSM 17950 / CFBP 7177 / CIP 109463 / NCPPB 4357 / Et1/99).